We begin with the raw amino-acid sequence, 167 residues long: 16S rRNA aminocarboxypropyltransferase (167 aa).

Residues T17, V62, L84, Y99, and S103 each contribute to the S-adenosyl-L-methionine site.

It belongs to the TDD superfamily. TSR3 family.

It localises to the cytoplasm. It catalyses the reaction an N(1)-methylpseudouridine in rRNA + S-adenosyl-L-methionine = N(1)-methyl-N(3)-[(3S)-3-amino-3-carboxypropyl]pseudouridine in rRNA + S-methyl-5'-thioadenosine + H(+). In terms of biological role, aminocarboxypropyltransferase that catalyzes the aminocarboxypropyl transfer on pseudouridine corresponding to position 914 in M.jannaschii 16S rRNA. It constitutes the last step in biosynthesis of the hypermodified N1-methyl-N3-(3-amino-3-carboxypropyl) pseudouridine (m1acp3-Psi). The sequence is that of 16S rRNA aminocarboxypropyltransferase from Sulfurisphaera tokodaii (strain DSM 16993 / JCM 10545 / NBRC 100140 / 7) (Sulfolobus tokodaii).